Consider the following 404-residue polypeptide: Formate-dependent phosphoribosylglycinamide formyltransferase (404 aa).

Residues glutamate 25–leucine 26 and glutamate 85 contribute to the N(1)-(5-phospho-beta-D-ribosyl)glycinamide site. ATP-binding positions include arginine 118, lysine 159, serine 164 to glutamine 169, glutamate 199 to isoleucine 202, and glutamate 207. In terms of domain architecture, ATP-grasp spans arginine 123–leucine 318. The Mg(2+) site is built by glutamate 277 and glutamate 289. Residues aspartate 296, lysine 365, and arginine 372–arginine 373 contribute to the N(1)-(5-phospho-beta-D-ribosyl)glycinamide site.

The protein belongs to the PurK/PurT family. As to quaternary structure, homodimer.

The catalysed reaction is N(1)-(5-phospho-beta-D-ribosyl)glycinamide + formate + ATP = N(2)-formyl-N(1)-(5-phospho-beta-D-ribosyl)glycinamide + ADP + phosphate + H(+). It functions in the pathway purine metabolism; IMP biosynthesis via de novo pathway; N(2)-formyl-N(1)-(5-phospho-D-ribosyl)glycinamide from N(1)-(5-phospho-D-ribosyl)glycinamide (formate route): step 1/1. Involved in the de novo purine biosynthesis. Catalyzes the transfer of formate to 5-phospho-ribosyl-glycinamide (GAR), producing 5-phospho-ribosyl-N-formylglycinamide (FGAR). Formate is provided by PurU via hydrolysis of 10-formyl-tetrahydrofolate. This Burkholderia pseudomallei (strain 1106a) protein is Formate-dependent phosphoribosylglycinamide formyltransferase.